We begin with the raw amino-acid sequence, 623 residues long: Chaperone protein HtpG (623 aa).

The segment at 1-330 (MIMTQEKKKF…SEDLPLNISR (330 aa)) is a; substrate-binding. The segment at 331–546 (ESLQHNSVLE…DAAMDIRMER (216 aa)) is b. The segment at 477–497 (SDIDVEQTTSQSEEKNTDSKK) is disordered. The segment covering 488–497 (SEEKNTDSKK) has biased composition (basic and acidic residues). The tract at residues 547-623 (FLIEQKQIAN…LNDIVQKAIL (77 aa)) is c.

This sequence belongs to the heat shock protein 90 family. In terms of assembly, homodimer.

It is found in the cytoplasm. Functionally, molecular chaperone. Has ATPase activity. In Rickettsia massiliae (strain Mtu5), this protein is Chaperone protein HtpG.